An 852-amino-acid chain; its full sequence is MPSIKKQENSNAGGWFSSWFFSNTANEDQDDMLPSTSAAAGETNYARNQQTLSSLRSQKSANKPTTAQNRNSAATLVRTDTESYLDAPKSSRDQANGVLRRKVTRRLQLTNNNLVIDCPIPDRLLGALTFNDHDEFSQLRYTAATCEPDEFESRGFTLRPKIYNRETELFIVMTMYNEDEILFTRTMHGVMKNIAHLCSLKKSTMWGPDGWKKVVVCIVADGRQVVNKKVLDVLASMGVYQAGIAKNVVDDKPVKAHIYEYTTQISIDSDMNIKGSDKGIVPVQIMFCLKEKNAKKINSHRWFFNAFGPIIKPNVCILLDVGTRPGNSSIYQLWKVFDRNPLIGGACGEIRAMLGTACCQLLNPLVAAQNFEYKMSNILDKPLESVFGYISVLPGAFSAYRYAALKNDVNGHGPLEKYFIGEDLHSNLQGSSQSIKNTGLFEANMYLAEDRILCFELVAKKDERWLLQYVGSAFGETDVPSQLPEFISQRRRWLNGSFFAGVYGLIHFRKIWNSGHGFNRTLLLMIEGIYNVISLVFSWFSVGNFYIAFYFITKSLSASNVDPFGNGWGSRIFDFCKYAYAFLLFVIFICSMGNRPQGSKFLFMACLVGFAIIMCYMLFCSSWLIYKGIQLAAEKYDWTYDTTTNFQIAMSDPGLRNMVISLSSTYGIYLVSSCLHRQPFHMMTSFLPYLLLLPGYINILNIYAFCNTHDVSWGTKGDNSVAKDLGVVKVSEKEKGVKTVEIELPADQHDINCQYDEALFALDEKPSKDTGSGGSLTKDDYYRSFRTHLVLAWIACNALLVVFITTSDYESIFNASVGTTYMSIMLWVNCGLGIFRFLGSIMFLLLGIFTSG.

Disordered stretches follow at residues 27–46 and 53–97; these read EDQDDMLPSTSAAAGETNYA and SSLR…QANG. Polar residues predominate over residues 53–74; it reads SSLRSQKSANKPTTAQNRNSAA. A run of 7 helical transmembrane segments spans residues 492 to 509, 532 to 552, 572 to 592, 601 to 621, 686 to 706, 787 to 807, and 830 to 850; these read RWLNGSFFAGVYGLIHFR, VISLVFSWFSVGNFYIAFYFI, IFDFCKYAYAFLLFVIFICSM, FLFMACLVGFAIIMCYMLFCS, FLPYLLLLPGYINILNIYAFC, THLVLAWIACNALLVVFITTS, and CGLGIFRFLGSIMFLLLGIFT.

This sequence belongs to the chitin synthase family. Class II subfamily.

The protein resides in the cell membrane. The enzyme catalyses [(1-&gt;4)-N-acetyl-beta-D-glucosaminyl](n) + UDP-N-acetyl-alpha-D-glucosamine = [(1-&gt;4)-N-acetyl-beta-D-glucosaminyl](n+1) + UDP + H(+). Functionally, polymerizes chitin, a structural polymer of the cell wall and septum, by transferring the sugar moiety of UDP-GlcNAc to the non-reducing end of the growing chitin polymer. The polypeptide is Chitin synthase 1 (CHS1) (Mucor circinelloides f. lusitanicus (Mucor racemosus var. lusitanicus)).